The following is a 311-amino-acid chain: Cytochrome f (311 aa).

The N-terminal stretch at 1-27 (MRRHLSLLIGSLVLGLSLLIAPAASWA) is a signal peptide. The heme site is built by Y28, C48, C51, and H52. The helical transmembrane segment at 277–297 (IYGLLAFFAAVALAQIMLVLK) threads the bilayer.

It belongs to the cytochrome f family. The 4 large subunits of the cytochrome b6-f complex are cytochrome b6, subunit IV (17 kDa polypeptide, PetD), cytochrome f and the Rieske protein, while the 4 small subunits are PetG, PetL, PetM and PetN. The complex functions as a dimer. Heme serves as cofactor.

It is found in the cellular thylakoid membrane. Functionally, component of the cytochrome b6-f complex, which mediates electron transfer between photosystem II (PSII) and photosystem I (PSI), cyclic electron flow around PSI, and state transitions. The polypeptide is Cytochrome f (Parasynechococcus marenigrum (strain WH8102)).